The following is an 89-amino-acid chain: Cell division topological specificity factor (89 aa).

It belongs to the MinE family.

Prevents the cell division inhibition by proteins MinC and MinD at internal division sites while permitting inhibition at polar sites. This ensures cell division at the proper site by restricting the formation of a division septum at the midpoint of the long axis of the cell. In Brucella anthropi (strain ATCC 49188 / DSM 6882 / CCUG 24695 / JCM 21032 / LMG 3331 / NBRC 15819 / NCTC 12168 / Alc 37) (Ochrobactrum anthropi), this protein is Cell division topological specificity factor.